Consider the following 132-residue polypeptide: Ribonuclease P protein component (132 aa).

The protein belongs to the RnpA family. As to quaternary structure, consists of a catalytic RNA component (M1 or rnpB) and a protein subunit.

It catalyses the reaction Endonucleolytic cleavage of RNA, removing 5'-extranucleotides from tRNA precursor.. Functionally, RNaseP catalyzes the removal of the 5'-leader sequence from pre-tRNA to produce the mature 5'-terminus. It can also cleave other RNA substrates such as 4.5S RNA. The protein component plays an auxiliary but essential role in vivo by binding to the 5'-leader sequence and broadening the substrate specificity of the ribozyme. In Marinomonas sp. (strain MWYL1), this protein is Ribonuclease P protein component.